The sequence spans 395 residues: Probable beta-1,3-galactosyltransferase 8 (395 aa).

A helical; Signal-anchor for type II membrane protein membrane pass occupies residues 5 to 27; it reads AASGKAIIVLCLASFLAGSLFMS. N117 is a glycosylation site (N-linked (GlcNAc...) asparagine).

Belongs to the glycosyltransferase 31 family. Mn(2+) is required as a cofactor.

It localises to the golgi apparatus membrane. The protein operates within protein modification; protein glycosylation. Functionally, beta-1,3-galactosyltransferase that transfers galactose from UDP-galactose to substrates with a terminal glycosyl residue. This Arabidopsis thaliana (Mouse-ear cress) protein is Probable beta-1,3-galactosyltransferase 8 (B3GALT8).